The primary structure comprises 766 residues: 5-methyltetrahydropteroyltriglutamate--homocysteine methyltransferase (766 aa).

5-methyltetrahydropteroyltri-L-glutamate-binding positions include 16–19 (RELK) and lysine 119. L-homocysteine contacts are provided by residues 440-442 (IGS) and glutamate 493. Residues 440 to 442 (IGS) and glutamate 493 contribute to the L-methionine site. 5-methyltetrahydropteroyltri-L-glutamate contacts are provided by residues 524–525 (RC) and tryptophan 570. Aspartate 608 provides a ligand contact to L-homocysteine. Position 608 (aspartate 608) interacts with L-methionine. Glutamate 614 contributes to the 5-methyltetrahydropteroyltri-L-glutamate binding site. Positions 650, 652, and 674 each coordinate Zn(2+). Catalysis depends on histidine 703, which acts as the Proton donor. Residue cysteine 735 coordinates Zn(2+).

Belongs to the vitamin-B12 independent methionine synthase family. Zn(2+) serves as cofactor.

The enzyme catalyses 5-methyltetrahydropteroyltri-L-glutamate + L-homocysteine = tetrahydropteroyltri-L-glutamate + L-methionine. The protein operates within amino-acid biosynthesis; L-methionine biosynthesis via de novo pathway; L-methionine from L-homocysteine (MetE route): step 1/1. Catalyzes the transfer of a methyl group from 5-methyltetrahydrofolate to homocysteine resulting in methionine formation. The chain is 5-methyltetrahydropteroyltriglutamate--homocysteine methyltransferase from Pseudomonas aeruginosa (strain ATCC 15692 / DSM 22644 / CIP 104116 / JCM 14847 / LMG 12228 / 1C / PRS 101 / PAO1).